The sequence spans 378 residues: Odorant receptor Or2 (378 aa).

Residue M1 is a topological domain, cytoplasmic. Residues 2 to 22 traverse the membrane as a helical segment; the sequence is LIEECPIIGVNVRVWLFWSYL. Residues 23 to 29 are Extracellular-facing; that stretch reads RRPRLSR. A helical transmembrane segment spans residues 30-50; the sequence is FLVGCIPVAVLNVFQFLKLYS. Topologically, residues 51–59 are cytoplasmic; it reads SWGDMSELI. Residues 60 to 80 form a helical membrane-spanning segment; sequence INGYFTVLYFNLVLRTSFLVI. Residues 81–120 lie on the Extracellular side of the membrane; the sequence is NRRKFETFFEGVAAEYALLEKNDDIRPVLERYTRRGRMLS. The chain crosses the membrane as a helical span at residues 121–141; sequence ISNLWLGAFISACFVTYPLFV. Topologically, residues 142–164 are cytoplasmic; the sequence is PGRGLPYGVTIPGVDVLATPTYQ. The helical transmembrane segment at 165-185 threads the bilayer; it reads VVFVLQVYLTFPACCMYIPFT. The Extracellular segment spans residues 186-254; sequence SFYATCTLFA…HDLNSLVTHL (69 aa). A helical transmembrane segment spans residues 255-275; sequence CLLEFLSFGMMLCALLFLLSI. The Cytoplasmic segment spans residues 276–278; the sequence is SNQ. The chain crosses the membrane as a helical span at residues 279–299; that stretch reads LAQMIMIGSYIFMILSQMFAF. Residues 300–378 lie on the Extracellular side of the membrane; sequence YWHANEVLEQ…YFTLLRRVYN (79 aa). N-linked (GlcNAc...) asparagine glycosylation is present at N364.

It belongs to the insect chemoreceptor superfamily. Heteromeric odorant receptor channel (TC 1.A.69) family. Or30a subfamily. In terms of tissue distribution, expressed in male and female antennae and maxillary palps.

Its subcellular location is the cell membrane. Functionally, odorant receptor which plays a critical role in the anthropophilic host-seeking behavior; establishes the host preference to transmit malaria. This chain is Odorant receptor Or2 (OR2), found in Anopheles gambiae (African malaria mosquito).